Consider the following 896-residue polypeptide: Valine--tRNA ligase (896 aa).

The 'HIGH' region motif lies at 48-58 (PNVTGSLHMGH). Positions 543-547 (KMSKS) match the 'KMSKS' region motif. Residue Lys-546 participates in ATP binding. Residues 830 to 896 (VIDLDAERTR…ARLGAALERL (67 aa)) adopt a coiled-coil conformation.

It belongs to the class-I aminoacyl-tRNA synthetase family. ValS type 1 subfamily. As to quaternary structure, monomer.

The protein localises to the cytoplasm. It catalyses the reaction tRNA(Val) + L-valine + ATP = L-valyl-tRNA(Val) + AMP + diphosphate. Catalyzes the attachment of valine to tRNA(Val). As ValRS can inadvertently accommodate and process structurally similar amino acids such as threonine, to avoid such errors, it has a 'posttransfer' editing activity that hydrolyzes mischarged Thr-tRNA(Val) in a tRNA-dependent manner. The sequence is that of Valine--tRNA ligase from Granulibacter bethesdensis (strain ATCC BAA-1260 / CGDNIH1).